Reading from the N-terminus, the 480-residue chain is Protein nucleotidyltransferase YdiU (480 aa).

Positions 86, 88, 89, 109, 121, 122, 172, and 179 each coordinate ATP. Residue Asp-248 is the Proton acceptor of the active site. 2 residues coordinate Mg(2+): Asn-249 and Asp-258. ATP is bound at residue Asp-258.

The protein belongs to the SELO family. Mg(2+) is required as a cofactor. The cofactor is Mn(2+).

The enzyme catalyses L-seryl-[protein] + ATP = 3-O-(5'-adenylyl)-L-seryl-[protein] + diphosphate. It catalyses the reaction L-threonyl-[protein] + ATP = 3-O-(5'-adenylyl)-L-threonyl-[protein] + diphosphate. It carries out the reaction L-tyrosyl-[protein] + ATP = O-(5'-adenylyl)-L-tyrosyl-[protein] + diphosphate. The catalysed reaction is L-histidyl-[protein] + UTP = N(tele)-(5'-uridylyl)-L-histidyl-[protein] + diphosphate. The enzyme catalyses L-seryl-[protein] + UTP = O-(5'-uridylyl)-L-seryl-[protein] + diphosphate. It catalyses the reaction L-tyrosyl-[protein] + UTP = O-(5'-uridylyl)-L-tyrosyl-[protein] + diphosphate. Nucleotidyltransferase involved in the post-translational modification of proteins. It can catalyze the addition of adenosine monophosphate (AMP) or uridine monophosphate (UMP) to a protein, resulting in modifications known as AMPylation and UMPylation. The protein is Protein nucleotidyltransferase YdiU of Salmonella paratyphi A (strain ATCC 9150 / SARB42).